The primary structure comprises 1402 residues: DNA-directed RNA polymerase subunit beta' (1402 aa).

Cysteine 71, cysteine 73, cysteine 86, and cysteine 89 together coordinate Zn(2+). Residues aspartate 462, aspartate 464, and aspartate 466 each contribute to the Mg(2+) site. Zn(2+) contacts are provided by cysteine 811, cysteine 885, cysteine 892, and cysteine 895.

It belongs to the RNA polymerase beta' chain family. The RNAP catalytic core consists of 2 alpha, 1 beta, 1 beta' and 1 omega subunit. When a sigma factor is associated with the core the holoenzyme is formed, which can initiate transcription. Mg(2+) is required as a cofactor. Zn(2+) serves as cofactor.

The catalysed reaction is RNA(n) + a ribonucleoside 5'-triphosphate = RNA(n+1) + diphosphate. In terms of biological role, DNA-dependent RNA polymerase catalyzes the transcription of DNA into RNA using the four ribonucleoside triphosphates as substrates. The chain is DNA-directed RNA polymerase subunit beta' from Rhizobium johnstonii (strain DSM 114642 / LMG 32736 / 3841) (Rhizobium leguminosarum bv. viciae).